Consider the following 257-residue polypeptide: Small ribosomal subunit protein uS2 (257 aa).

Belongs to the universal ribosomal protein uS2 family.

The protein is Small ribosomal subunit protein uS2 of Ruegeria pomeroyi (strain ATCC 700808 / DSM 15171 / DSS-3) (Silicibacter pomeroyi).